Reading from the N-terminus, the 20-residue chain is Antimicrobial peptide AJN-10 (20 aa).

It localises to the secreted. In terms of biological role, displays antimicrobial activity against the Gram-negative bacterium A.hydrophila. In Anguilla japonica (Japanese eel), this protein is Antimicrobial peptide AJN-10.